The primary structure comprises 256 residues: Pimeloyl-[acyl-carrier protein] methyl ester esterase (256 aa).

The AB hydrolase-1 domain maps to 15-242 (HLVLLHGWGL…AAHAPFISHP (228 aa)). Substrate contacts are provided by residues Trp-22, 82–83 (SL), and 143–147 (FLALQ). The active-site Nucleophile is the Ser-82. Active-site residues include Asp-207 and His-235. His-235 is a substrate binding site.

Belongs to the AB hydrolase superfamily. Carboxylesterase BioH family. In terms of assembly, monomer.

Its subcellular location is the cytoplasm. The catalysed reaction is 6-carboxyhexanoyl-[ACP] methyl ester + H2O = 6-carboxyhexanoyl-[ACP] + methanol + H(+). The protein operates within cofactor biosynthesis; biotin biosynthesis. The physiological role of BioH is to remove the methyl group introduced by BioC when the pimeloyl moiety is complete. It allows to synthesize pimeloyl-ACP via the fatty acid synthetic pathway through the hydrolysis of the ester bonds of pimeloyl-ACP esters. This chain is Pimeloyl-[acyl-carrier protein] methyl ester esterase, found in Escherichia coli O157:H7.